The primary structure comprises 348 residues: Glycerol-1-phosphate dehydrogenase [NAD(P)+] (348 aa).

Residues 94–98 (GKPID) and 116–119 (TAAS) each bind NAD(+). Aspartate 121 contributes to the substrate binding site. An NAD(+)-binding site is contributed by serine 125. Aspartate 168 contributes to the substrate binding site. Residues aspartate 168 and histidine 248 each contribute to the Zn(2+) site. Histidine 252 contributes to the substrate binding site. Histidine 264 is a Zn(2+) binding site.

Belongs to the glycerol-1-phosphate dehydrogenase family. Requires Zn(2+) as cofactor.

It is found in the cytoplasm. The catalysed reaction is sn-glycerol 1-phosphate + NAD(+) = dihydroxyacetone phosphate + NADH + H(+). It catalyses the reaction sn-glycerol 1-phosphate + NADP(+) = dihydroxyacetone phosphate + NADPH + H(+). It functions in the pathway membrane lipid metabolism; glycerophospholipid metabolism. Functionally, catalyzes the NAD(P)H-dependent reduction of dihydroxyacetonephosphate (DHAP or glycerone phosphate) to glycerol 1-phosphate (G1P). The G1P thus generated is used as the glycerophosphate backbone of phospholipids in the cellular membranes of Archaea. This is Glycerol-1-phosphate dehydrogenase [NAD(P)+] from Haloquadratum walsbyi (strain DSM 16790 / HBSQ001).